A 1040-amino-acid chain; its full sequence is Contactin-2 (1040 aa).

The signal sequence occupies residues 1–30 (MGTATRRKPHLLLVAAVALVSSSAWSSALG). 6 consecutive Ig-like C2-type domains span residues 43–128 (PLSV…AILR), 133–222 (QEFS…SVFS), 239–322 (PSIK…GRII), 327–411 (PEWL…AELA), 417–504 (PDFR…GILS), and 509–603 (TKIT…ATVL). 4 cysteine pairs are disulfide-bonded: cysteine 61/cysteine 111, cysteine 155/cysteine 207, cysteine 261/cysteine 306, and cysteine 348/cysteine 395. Asparagine 76, asparagine 198, and asparagine 204 each carry an N-linked (GlcNAc...) asparagine glycan. N-linked (GlcNAc...) asparagine glycosylation is found at asparagine 461, asparagine 477, asparagine 498, and asparagine 525. Fibronectin type-III domains are found at residues 610 to 708 (PPGG…TREA), 713 to 810 (APSG…SAEE), 815 to 910 (APTK…TMKP), and 915 to 1006 (PPGN…NGGT). The tract at residues 694–720 (GEPSGPSSKIRTREAAPSVAPSGLSGG) is disordered. Residues 794–796 (RGD) carry the Cell attachment site motif. N-linked (GlcNAc...) asparagine glycosylation is found at asparagine 830, asparagine 904, asparagine 918, and asparagine 940. The disordered stretch occupies residues 894–919 (AGTGPASPSANATTMKPPPRRPPGNI). A lipid anchor (GPI-anchor amidated asparagine) is attached at asparagine 1012. Residues 1013 to 1040 (MAVRPAPHPGTVISHSVAMLILIGSLEL) constitute a propeptide, removed in mature form.

This sequence belongs to the immunoglobulin superfamily. Contactin family.

The protein resides in the cell membrane. Functionally, in conjunction with another transmembrane protein, CNTNAP2, contributes to the organization of axonal domains at nodes of Ranvier by maintaining voltage-gated potassium channels at the juxtaparanodal region. May be involved in cell adhesion. This Homo sapiens (Human) protein is Contactin-2 (CNTN2).